An 899-amino-acid polypeptide reads, in one-letter code: Probable dipeptidyl-aminopeptidase B (899 aa).

Disordered stretches follow at residues 1–37 (MARKDKDNGPEFVPLTNRSHRSSASFSSTDSLSSDGS) and 51–84 (KITRTQLPEENPYRDDDVELERGDNIFSRPTENS). Residues 1 to 91 (MARKDKDNGP…ENSKRNRGSR (91 aa)) lie on the Cytoplasmic side of the membrane. The segment covering 22–37 (SSASFSSTDSLSSDGS) has biased composition (low complexity). A compositionally biased stretch (basic and acidic residues) spans 61-74 (NPYRDDDVELERGD). The helical; Signal-anchor for type II membrane protein transmembrane segment at 92-112 (LIWVVGLLCLGGWILAFVLFW) threads the bilayer. Topologically, residues 113 to 899 (GRRNSELSSS…QQGNSVLPVT (787 aa)) are vacuolar. N-linked (GlcNAc...) asparagine glycosylation is found at asparagine 149, asparagine 194, asparagine 347, asparagine 409, asparagine 513, asparagine 638, and asparagine 643. The active-site Charge relay system is the serine 752. Asparagine 811 is a glycosylation site (N-linked (GlcNAc...) asparagine). Catalysis depends on charge relay system residues aspartate 829 and histidine 862.

The protein belongs to the peptidase S9B family.

The protein localises to the vacuole membrane. The catalysed reaction is Release of an N-terminal dipeptide, Xaa-Yaa-|-Zaa-, from a polypeptide, preferentially when Yaa is Pro, provided Zaa is neither Pro nor hydroxyproline.. Functionally, type IV dipeptidyl-peptidase which removes N-terminal dipeptides sequentially from polypeptides having unsubstituted N-termini provided that the penultimate residue is proline. This is Probable dipeptidyl-aminopeptidase B (dapB) from Talaromyces marneffei (strain ATCC 18224 / CBS 334.59 / QM 7333) (Penicillium marneffei).